The primary structure comprises 157 residues: CASP-like protein 1 (157 aa).

Residues 1–13 (MKTEARDGGSEWR) are Cytoplasmic-facing. Residues 14-34 (WVAIFELFLRLAAIVSTSVAV) form a helical membrane-spanning segment. Topologically, residues 35-40 (YAAMGK) are extracellular. Residues 41–61 (IFVVAVNGVACFYLLMSLPVS) form a helical membrane-spanning segment. At 62–82 (IFNIMRPHAYPANRVFLNIMD) the chain is on the cytoplasmic side. Residues 83 to 103 (MVMVALVTAGALAAGIVYLVE) form a helical membrane-spanning segment. Residues 104 to 121 (KAGNARASWVSVWSQFDS) lie on the Extracellular side of the membrane. A helical membrane pass occupies residues 122–142 (SSCFAVLALILHVLLSGVILY). Residues 143–157 (KQALNIKFKKLDSVD) are Cytoplasmic-facing.

It belongs to the Casparian strip membrane proteins (CASP) family. In terms of assembly, homodimer and heterodimers.

Its subcellular location is the cell membrane. The protein is CASP-like protein 1 of Picea sitchensis (Sitka spruce).